Here is a 485-residue protein sequence, read N- to C-terminus: Amyloid beta A4 precursor protein-binding family B member 1-interacting protein (485 aa).

The span at 84–107 (QAQKTSGNQQSVVTQPSTGTNNDF) shows a compositional bias: polar residues. The segment at 84 to 157 (QAQKTSGNQQ…LSQEEQEARA (74 aa)) is disordered. Over residues 125-147 (LPPPPPAPDLDLPPPPPPPPPEP) the composition is skewed to pro residues. A Ras-associating domain is found at 175-262 (KKLVVKVHMY…KVLFLEKKEK (88 aa)). A PH domain is found at 305-414 (VPELEGALYL…WVTGIRIAKY (110 aa)).

It belongs to the MRL family.

The protein resides in the cell membrane. The protein localises to the cytoplasm. It localises to the cytoskeleton. Appears to function in the signal transduction from Ras activation to actin cytoskeletal remodeling. The chain is Amyloid beta A4 precursor protein-binding family B member 1-interacting protein (APBB1IP) from Gallus gallus (Chicken).